A 691-amino-acid chain; its full sequence is MALDRRGFLKFIGGATAGILATPVVWKGLDDVSIWSQNWSWIPRNIKGANSYVPTVSKLCPTGIGVRVRLVDGRPVRVIGNPEHPLSKGGVSSIAAAEVQMLYSPARMKRPLKRSPDGAYVMISWEEAEAMLLDGLKAAKGGDALACISGDDNGTINELLSAFVQQSGSKSFFLMPGEAQPAAKAWDLMGGEGQIGYDIEKSDFVLAIGANVLEAWGTAIRNRHAFGASHPHGAEPTAQFVYAGPVLNNTATGADDWLPIRPGTESAFALGLAHLLIKAGASSSAPDFDAFRSLAASFSPEKVAAQTGVDAKALTALAQALAKAKHPLVIVGSEFSQGAGAAPVMAGIALNMLLGSVNRDGGLRALPVARKVVPAGMDRKAMLQQDLTLWASAIASGKAKAPKAMLVYEANPVYALPQGSAFKDTLAKVPFKVAFTSFLDETAMQCDLVIPVSMGLERLDDVCTPYGCGEVVYSLATPVTAPLFDTKPAGDALIALGGKLGLDLGVASFEDMLKAKAAAHGADFDKLAEGTAFTSRATVGANLSFRPDVLSKALDVKAPALPLALAPVMKLNMGTSKTAIPPFNTKTIRRWEVQGKEGYVMLNGATARKLGLAQHDRVVLSNPTGKVTVRVNIFEGVMNDTVAMPLGFGHTAFDEFSKGKGENVMHLLAPSTEPVTGLAVWTGAGVNIAKA.

Residues 1–27 (MALDRRGFLKFIGGATAGILATPVVWK) constitute a signal peptide (tat-type signal). Residues 50–106 (NSYVPTVSKLCPTGIGVRVRLVDGRPVRVIGNPEHPLSKGGVSSIAAAEVQMLYSPA) enclose the 4Fe-4S Mo/W bis-MGD-type domain.

The protein belongs to the prokaryotic molybdopterin-containing oxidoreductase family. The Qrc complex is composed of four subunits: QrcA, QrcB, QrcC and QrcD. Can form a supercomplex with the [NiFe] hydrogenase HynA1 and the tetraheme Type I cytochrome c3 TpIc(3), its physiological electron donors. Requires There is no molybdenum or tungsten pterin cofactor present in the Qrc complex, despite the similarity of QrcB to molybdopterin-containing oxidoreductases. as cofactor. Predicted to be exported by the Tat system. The position of the signal peptide cleavage has not been experimentally proven.

Its subcellular location is the periplasm. Its function is as follows. Component of the respiratory Qrc complex, that catalyzes the reduction of the menaquinone pool using electrons transferred from the reduced periplasmic cytochrome c3, and which is probably involved in sulfate respiration. Is likely essential for growth on H(2) or formate since the periplasmic hydrogenases and/or formate dehydrogenases act as primary electron donors for the Qrc complex. The function of the QrcB subunit is unknown; in the absence of a catalytic site, it may provide a structural scaffold for the other subunits. The sequence is that of Menaquinone reductase, molybdopterin-binding-like subunit from Nitratidesulfovibrio vulgaris (strain ATCC 29579 / DSM 644 / CCUG 34227 / NCIMB 8303 / VKM B-1760 / Hildenborough) (Desulfovibrio vulgaris).